The sequence spans 360 residues: Protein Wnt-2 (360 aa).

A signal peptide spans 1–25 (MNACLVGIWLWLPLLFTWLSPEVSS). Intrachain disulfides connect Cys-76–Cys-87, Cys-127–Cys-135, Cys-137–Cys-157, Cys-206–Cys-220, Cys-208–Cys-215, Cys-278–Cys-309, Cys-294–Cys-304, Cys-308–Cys-348, Cys-324–Cys-339, Cys-326–Cys-336, and Cys-331–Cys-332. Ser-212 is lipidated: O-palmitoleoyl serine; by PORCN. The N-linked (GlcNAc...) asparagine glycan is linked to Asn-295.

It belongs to the Wnt family. Palmitoleoylation is required for efficient binding to frizzled receptors. Depalmitoleoylation leads to Wnt signaling pathway inhibition.

The protein resides in the secreted. It localises to the extracellular space. It is found in the extracellular matrix. Functionally, ligand for members of the frizzled family of seven transmembrane receptors. Probable developmental protein. May be a signaling molecule which affects the development of discrete regions of tissues. Is likely to signal over only few cell diameters. This Muntiacus muntjak (Barking deer) protein is Protein Wnt-2 (WNT2).